A 280-amino-acid polypeptide reads, in one-letter code: Urease accessory protein UreD (280 aa).

It belongs to the UreD family. As to quaternary structure, ureD, UreF and UreG form a complex that acts as a GTP-hydrolysis-dependent molecular chaperone, activating the urease apoprotein by helping to assemble the nickel containing metallocenter of UreC. The UreE protein probably delivers the nickel.

It is found in the cytoplasm. Required for maturation of urease via the functional incorporation of the urease nickel metallocenter. The sequence is that of Urease accessory protein UreD from Vibrio parahaemolyticus.